The following is a 141-amino-acid chain: Putative nickel-responsive regulator (141 aa).

Ni(2+)-binding residues include H80, H91, H93, and C99.

This sequence belongs to the transcriptional regulatory CopG/NikR family. The cofactor is Ni(2+).

Transcriptional regulator. This Methanococcus vannielii (strain ATCC 35089 / DSM 1224 / JCM 13029 / OCM 148 / SB) protein is Putative nickel-responsive regulator.